A 563-amino-acid polypeptide reads, in one-letter code: Arginine--tRNA ligase (563 aa).

The 'HIGH' region signature appears at 122–132 (PNIAKPISMGH).

This sequence belongs to the class-I aminoacyl-tRNA synthetase family. In terms of assembly, monomer.

Its subcellular location is the cytoplasm. It carries out the reaction tRNA(Arg) + L-arginine + ATP = L-arginyl-tRNA(Arg) + AMP + diphosphate. In Latilactobacillus sakei subsp. sakei (strain 23K) (Lactobacillus sakei subsp. sakei), this protein is Arginine--tRNA ligase.